We begin with the raw amino-acid sequence, 255 residues long: Diphthine synthase (255 aa).

Residues L9, D85, V88, 113 to 114 (SI), L164, A207, and H232 each bind S-adenosyl-L-methionine.

It belongs to the diphthine synthase family. In terms of assembly, homodimer.

The catalysed reaction is 2-[(3S)-amino-3-carboxypropyl]-L-histidyl-[translation elongation factor 2] + 3 S-adenosyl-L-methionine = diphthine-[translation elongation factor 2] + 3 S-adenosyl-L-homocysteine + 3 H(+). It participates in protein modification; peptidyl-diphthamide biosynthesis. S-adenosyl-L-methionine-dependent methyltransferase that catalyzes the trimethylation of the amino group of the modified target histidine residue in translation elongation factor 2 (EF-2), to form an intermediate called diphthine. The three successive methylation reactions represent the second step of diphthamide biosynthesis. This chain is Diphthine synthase, found in Methanococcus maripaludis (strain C6 / ATCC BAA-1332).